The following is a 172-amino-acid chain: 3-hydroxydecanoyl-[acyl-carrier-protein] dehydratase (172 aa).

The active site involves His-71.

It belongs to the thioester dehydratase family. FabA subfamily. As to quaternary structure, homodimer.

It is found in the cytoplasm. It catalyses the reaction a (3R)-hydroxyacyl-[ACP] = a (2E)-enoyl-[ACP] + H2O. The catalysed reaction is (3R)-hydroxydecanoyl-[ACP] = (2E)-decenoyl-[ACP] + H2O. The enzyme catalyses (2E)-decenoyl-[ACP] = (3Z)-decenoyl-[ACP]. Its pathway is lipid metabolism; fatty acid biosynthesis. In terms of biological role, necessary for the introduction of cis unsaturation into fatty acids. Catalyzes the dehydration of (3R)-3-hydroxydecanoyl-ACP to E-(2)-decenoyl-ACP and then its isomerization to Z-(3)-decenoyl-ACP. Can catalyze the dehydratase reaction for beta-hydroxyacyl-ACPs with saturated chain lengths up to 16:0, being most active on intermediate chain length. This Edwardsiella ictaluri (strain 93-146) protein is 3-hydroxydecanoyl-[acyl-carrier-protein] dehydratase.